Here is a 282-residue protein sequence, read N- to C-terminus: Phosphatidylglycerol--prolipoprotein diacylglyceryl transferase (282 aa).

4 consecutive transmembrane segments (helical) span residues 23–43 (IGPL…LLGW), 71–91 (FIVW…IFFY), 106–126 (IWNG…AMII), and 132–152 (GIPI…GLFF). A 1,2-diacyl-sn-glycero-3-phospho-(1'-sn-glycerol) is bound at residue R154. 3 helical membrane-spanning segments follow: residues 189–209 (LYEA…LVYG), 217–237 (GFIT…VEFF), and 252–272 (WLTM…WAML).

Belongs to the Lgt family.

Its subcellular location is the cell inner membrane. The enzyme catalyses L-cysteinyl-[prolipoprotein] + a 1,2-diacyl-sn-glycero-3-phospho-(1'-sn-glycerol) = an S-1,2-diacyl-sn-glyceryl-L-cysteinyl-[prolipoprotein] + sn-glycerol 1-phosphate + H(+). It participates in protein modification; lipoprotein biosynthesis (diacylglyceryl transfer). Functionally, catalyzes the transfer of the diacylglyceryl group from phosphatidylglycerol to the sulfhydryl group of the N-terminal cysteine of a prolipoprotein, the first step in the formation of mature lipoproteins. The polypeptide is Phosphatidylglycerol--prolipoprotein diacylglyceryl transferase (Rhizobium leguminosarum bv. trifolii (strain WSM2304)).